Here is a 297-residue protein sequence, read N- to C-terminus: tRNA dimethylallyltransferase (297 aa).

Residue 10 to 17 (GITASGKS) coordinates ATP. Residue 12-17 (TASGKS) coordinates substrate. The tract at residues 36–39 (DSKQ) is interaction with substrate tRNA.

Belongs to the IPP transferase family. As to quaternary structure, monomer. Mg(2+) is required as a cofactor.

It carries out the reaction adenosine(37) in tRNA + dimethylallyl diphosphate = N(6)-dimethylallyladenosine(37) in tRNA + diphosphate. Catalyzes the transfer of a dimethylallyl group onto the adenine at position 37 in tRNAs that read codons beginning with uridine, leading to the formation of N6-(dimethylallyl)adenosine (i(6)A). The polypeptide is tRNA dimethylallyltransferase (Wolbachia pipientis wMel).